A 250-amino-acid polypeptide reads, in one-letter code: Type III pantothenate kinase (250 aa).

Residue 13-20 (DVGNSYLK) coordinates ATP. 110 to 113 (GNDL) is a binding site for substrate. The Proton acceptor role is filled by Asp-112. Thr-134 serves as a coordination point for ATP. Residue Thr-186 coordinates substrate.

The protein belongs to the type III pantothenate kinase family. As to quaternary structure, homodimer. The cofactor is NH4(+). It depends on K(+) as a cofactor.

The protein localises to the cytoplasm. The catalysed reaction is (R)-pantothenate + ATP = (R)-4'-phosphopantothenate + ADP + H(+). It functions in the pathway cofactor biosynthesis; coenzyme A biosynthesis; CoA from (R)-pantothenate: step 1/5. Its function is as follows. Catalyzes the phosphorylation of pantothenate (Pan), the first step in CoA biosynthesis. This is Type III pantothenate kinase from Mycoplasmopsis synoviae (strain 53) (Mycoplasma synoviae).